Consider the following 440-residue polypeptide: Ribulose bisphosphate carboxylase large chain (440 aa).

The residue at position 4 (Lys4) is an N6,N6,N6-trimethyllysine. Substrate-binding residues include Asn113 and Thr163. The active-site Proton acceptor is the Lys165. Lys167 contacts substrate. Lys191, Asp193, and Glu194 together coordinate Mg(2+). Lys191 carries the post-translational modification N6-carboxylysine. The active-site Proton acceptor is His284. 3 residues coordinate substrate: Arg285, His317, and Ser369.

The protein belongs to the RuBisCO large chain family. Type I subfamily. As to quaternary structure, heterohexadecamer of 8 large chains and 8 small chains; disulfide-linked. The disulfide link is formed within the large subunit homodimers. It depends on Mg(2+) as a cofactor. In terms of processing, the disulfide bond which can form in the large chain dimeric partners within the hexadecamer appears to be associated with oxidative stress and protein turnover.

The protein resides in the plastid. The protein localises to the chloroplast. It carries out the reaction 2 (2R)-3-phosphoglycerate + 2 H(+) = D-ribulose 1,5-bisphosphate + CO2 + H2O. The catalysed reaction is D-ribulose 1,5-bisphosphate + O2 = 2-phosphoglycolate + (2R)-3-phosphoglycerate + 2 H(+). Functionally, ruBisCO catalyzes two reactions: the carboxylation of D-ribulose 1,5-bisphosphate, the primary event in carbon dioxide fixation, as well as the oxidative fragmentation of the pentose substrate in the photorespiration process. Both reactions occur simultaneously and in competition at the same active site. The sequence is that of Ribulose bisphosphate carboxylase large chain from Matteuccia struthiopteris (European ostrich fern).